We begin with the raw amino-acid sequence, 394 residues long: Nicotinate phosphoribosyltransferase (394 aa).

Residue H218 is modified to Phosphohistidine; by autocatalysis.

The protein belongs to the NAPRTase family. Transiently phosphorylated on a His residue during the reaction cycle. Phosphorylation strongly increases the affinity for substrates and increases the rate of nicotinate D-ribonucleotide production. Dephosphorylation regenerates the low-affinity form of the enzyme, leading to product release.

The enzyme catalyses nicotinate + 5-phospho-alpha-D-ribose 1-diphosphate + ATP + H2O = nicotinate beta-D-ribonucleotide + ADP + phosphate + diphosphate. It participates in cofactor biosynthesis; NAD(+) biosynthesis; nicotinate D-ribonucleotide from nicotinate: step 1/1. Its function is as follows. Catalyzes the synthesis of beta-nicotinate D-ribonucleotide from nicotinate and 5-phospho-D-ribose 1-phosphate at the expense of ATP. This chain is Nicotinate phosphoribosyltransferase, found in Xylella fastidiosa (strain Temecula1 / ATCC 700964).